We begin with the raw amino-acid sequence, 208 residues long: Ribosomal RNA small subunit methyltransferase G (208 aa).

S-adenosyl-L-methionine is bound by residues Gly-76, Leu-81, 127–128 (VE), and Arg-142.

The protein belongs to the methyltransferase superfamily. RNA methyltransferase RsmG family.

Its subcellular location is the cytoplasm. The catalysed reaction is guanosine(527) in 16S rRNA + S-adenosyl-L-methionine = N(7)-methylguanosine(527) in 16S rRNA + S-adenosyl-L-homocysteine. Its function is as follows. Specifically methylates the N7 position of guanine in position 527 of 16S rRNA. In Legionella pneumophila (strain Lens), this protein is Ribosomal RNA small subunit methyltransferase G.